An 88-amino-acid chain; its full sequence is MRLFIALPVLIVVVAMTLEGPAPAQAAPDLSGTLESIPDKLKEFGNTLEDKARAAIEHIKQKEILTKTRAWFSEAFGKVKEKLKTTFS.

A signal peptide spans 1 to 26 (MRLFIALPVLIVVVAMTLEGPAPAQA).

Belongs to the apolipoprotein C1 family. In terms of tissue distribution, adult and fetal liver.

The protein localises to the secreted. In terms of biological role, inhibitor of lipoprotein binding to the low density lipoprotein (LDL) receptor, LDL receptor-related protein, and very low density lipoprotein (VLDL) receptor. Associates with high density lipoproteins (HDL) and the triacylglycerol-rich lipoproteins in the plasma and makes up about 10% of the protein of the VLDL and 2% of that of HDL. Appears to interfere directly with fatty acid uptake and is also the major plasma inhibitor of cholesteryl ester transfer protein (CETP). Modulates the interaction of APOE with beta-migrating VLDL and inhibits binding of beta-VLDL to the LDL receptor-related protein. Binds free fatty acids and reduces their intracellular esterification. The chain is Apolipoprotein C-I (Apoc1) from Mus musculus (Mouse).